We begin with the raw amino-acid sequence, 173 residues long: Large ribosomal subunit protein uL10 (173 aa).

The protein belongs to the universal ribosomal protein uL10 family. Part of the ribosomal stalk of the 50S ribosomal subunit. The N-terminus interacts with L11 and the large rRNA to form the base of the stalk. The C-terminus forms an elongated spine to which L12 dimers bind in a sequential fashion forming a multimeric L10(L12)X complex.

In terms of biological role, forms part of the ribosomal stalk, playing a central role in the interaction of the ribosome with GTP-bound translation factors. This chain is Large ribosomal subunit protein uL10, found in Micrococcus luteus (strain ATCC 4698 / DSM 20030 / JCM 1464 / CCM 169 / CCUG 5858 / IAM 1056 / NBRC 3333 / NCIMB 9278 / NCTC 2665 / VKM Ac-2230) (Micrococcus lysodeikticus).